A 306-amino-acid polypeptide reads, in one-letter code: Ribosomal protein L11 methyltransferase (306 aa).

Residues Thr139, Gly173, Asp195, and Asn242 each contribute to the S-adenosyl-L-methionine site.

The protein belongs to the methyltransferase superfamily. PrmA family.

Its subcellular location is the cytoplasm. It carries out the reaction L-lysyl-[protein] + 3 S-adenosyl-L-methionine = N(6),N(6),N(6)-trimethyl-L-lysyl-[protein] + 3 S-adenosyl-L-homocysteine + 3 H(+). In terms of biological role, methylates ribosomal protein L11. The polypeptide is Ribosomal protein L11 methyltransferase (Nostoc sp. (strain PCC 7120 / SAG 25.82 / UTEX 2576)).